A 270-amino-acid chain; its full sequence is Putative serine acetyltransferase (270 aa).

Belongs to the transferase hexapeptide repeat family.

It is found in the cytoplasm. The protein resides in the nucleus. It carries out the reaction L-serine + acetyl-CoA = O-acetyl-L-serine + CoA. It participates in amino-acid biosynthesis; L-cysteine biosynthesis; L-cysteine from L-serine: step 1/2. The protein is Putative serine acetyltransferase of Schizosaccharomyces pombe (strain 972 / ATCC 24843) (Fission yeast).